The chain runs to 909 residues: MKKRRKVTSNLEKIHLGYHKDSSEGNVAVECDQVTYTHSAGRPTPEALHCYQELPPSPDQRKLLSSLQYNKNLLKYLNDDRQKQPSFCDLLIIVEGKEFSAHKVVVAVGSSYFHACLSKNPSTDVVTLDHVTHSVFQHLLEFLYTSEFFVYKYEIPLVLEAAKFLDIIDAVKLLNNENVAPFHSELTEKSSPEETLNELTGRLSNNHQCKFCSRHFCYKKSLENHLAKTHRSLLLGKKHGLKMLERSFSARRSKRNRKCPVKFDDTSDDEQESGDGSDNLNQENFDKEKSDRNDSEDPGSEYNAEEDELEEEMSDEYSDIEEQSEKDHNDAEEEPEAGDSVGNVHEGLTPVVIQNSNKKILQCPKCDKTFDRIGKYESHTRVHTGEKPFECDICHQRYSTKSNLTVHRKKHSNETEFHKKEHKCPYCNKLHASKKTLAKHVKRFHPENAQEFISIKKTKSESWKCDICKKSFTRRPHLEEHMILHSQDKPFKCTYCEEHFKSRFARLKHQEKFHLGPFPCDICGRQFNDTGNLKRHIECTHGGKRKWTCFICGKSVRERTTLKEHLRIHSGEKPHLCSICGQSFRHGSSYRLHLRVHHDDKRYECDECGKTFIRHDHLTKHKKIHSGEKAHQCEECGKCFGRRDHLTVHYKSVHLGEKVWQKYKATFHQCDVCKKIFKGKSSLEMHFRTHSGEKPYKCQICNQSFRIKKTLTKHLVIHSDARPFNCQHCNATFKRKDKLKYHIDHVHEIKSPDDPLSTSEEKLVSLPVEYSSDDKIFQTETKQYMDQPKVYQSEAKTMLQNVSAEVCVPVTLVPVQMPDTPSDLVRHTTTLPPSSHEILSPQPQSTDYPRAADLAFLEKYTLTPQPANIVHPVRPEQMLDPREQSYLGTLLGLDSTTGVQNISTNEHHS.

The BTB domain maps to 88–152 (CDLLIIVEGK…LYTSEFFVYK (65 aa)). A C2H2-type 1 zinc finger spans residues 207 to 230 (HQCKFCSRHFCYKKSLENHLAKTH). Residues 252–344 (RSKRNRKCPV…PEAGDSVGNV (93 aa)) are disordered. The segment covering 266-275 (TSDDEQESGD) has biased composition (acidic residues). Positions 284 to 295 (NFDKEKSDRNDS) are enriched in basic and acidic residues. Residues 296-322 (EDPGSEYNAEEDELEEEMSDEYSDIEE) are compositionally biased toward acidic residues. 13 C2H2-type zinc fingers span residues 361-383 (LQCP…TRVH), 389-411 (FECD…RKKH), 422-445 (HKCP…KRFH), 463-485 (WKCD…MILH), 491-514 (FKCT…EKFH), 518-541 (FPCD…ECTH), 547-569 (WTCF…LRIH), 575-597 (HLCS…LRVH), 603-625 (YECD…KKIH), 631-654 (HQCE…KSVH), 668-690 (HQCD…FRTH), 696-718 (YKCQ…LVIH), and 724-747 (FNCQ…DHVH).

Its subcellular location is the nucleus. May be involved in transcriptional regulation. In Homo sapiens (Human), this protein is Zinc finger and BTB domain-containing protein 41 (ZBTB41).